Reading from the N-terminus, the 156-residue chain is Small ribosomal subunit protein uS7 (156 aa).

This sequence belongs to the universal ribosomal protein uS7 family. In terms of assembly, part of the 30S ribosomal subunit. Contacts proteins S9 and S11.

Functionally, one of the primary rRNA binding proteins, it binds directly to 16S rRNA where it nucleates assembly of the head domain of the 30S subunit. Is located at the subunit interface close to the decoding center, probably blocks exit of the E-site tRNA. The protein is Small ribosomal subunit protein uS7 of Sorangium cellulosum (strain So ce56) (Polyangium cellulosum (strain So ce56)).